The primary structure comprises 209 residues: High frequency lysogenization protein HflD homolog (209 aa).

Belongs to the HflD family.

The protein resides in the cytoplasm. It localises to the cell inner membrane. The polypeptide is High frequency lysogenization protein HflD homolog (Sodalis glossinidius (strain morsitans)).